The primary structure comprises 149 residues: 3-hydroxyacyl-[acyl-carrier-protein] dehydratase FabZ (149 aa).

The active site involves histidine 53.

Belongs to the thioester dehydratase family. FabZ subfamily.

The protein resides in the cytoplasm. It carries out the reaction a (3R)-hydroxyacyl-[ACP] = a (2E)-enoyl-[ACP] + H2O. Involved in unsaturated fatty acids biosynthesis. Catalyzes the dehydration of short chain beta-hydroxyacyl-ACPs and long chain saturated and unsaturated beta-hydroxyacyl-ACPs. The chain is 3-hydroxyacyl-[acyl-carrier-protein] dehydratase FabZ from Neisseria gonorrhoeae (strain ATCC 700825 / FA 1090).